The sequence spans 179 residues: Large ribosomal subunit protein uL5 (179 aa).

Belongs to the universal ribosomal protein uL5 family. In terms of assembly, part of the 50S ribosomal subunit; part of the 5S rRNA/L5/L18/L25 subcomplex. Contacts the 5S rRNA and the P site tRNA. Forms a bridge to the 30S subunit in the 70S ribosome.

Functionally, this is one of the proteins that bind and probably mediate the attachment of the 5S RNA into the large ribosomal subunit, where it forms part of the central protuberance. In the 70S ribosome it contacts protein S13 of the 30S subunit (bridge B1b), connecting the 2 subunits; this bridge is implicated in subunit movement. Contacts the P site tRNA; the 5S rRNA and some of its associated proteins might help stabilize positioning of ribosome-bound tRNAs. This is Large ribosomal subunit protein uL5 from Staphylococcus saprophyticus subsp. saprophyticus (strain ATCC 15305 / DSM 20229 / NCIMB 8711 / NCTC 7292 / S-41).